Reading from the N-terminus, the 430-residue chain is Cytochrome c biogenesis protein CcsB (430 aa).

3 consecutive transmembrane segments (helical) span residues 14–34 (LRIAIGLLLVIALASALGTAI), 72–92 (SSWFLALLAWLGLALILCSWR), and 162–182 (AGPMLVHLGLVLLMLGAVWGS).

The protein belongs to the Ccs1/CcsB family. In terms of assembly, may interact with CcsA.

The protein localises to the cellular thylakoid membrane. Required during biogenesis of c-type cytochromes (cytochrome c6 and cytochrome f) at the step of heme attachment. The protein is Cytochrome c biogenesis protein CcsB of Prochlorococcus marinus (strain MIT 9313).